A 100-amino-acid polypeptide reads, in one-letter code: Urease subunit gamma (100 aa).

Belongs to the urease gamma subunit family. Heterotrimer of UreA (gamma), UreB (beta) and UreC (alpha) subunits. Three heterotrimers associate to form the active enzyme.

It localises to the cytoplasm. The enzyme catalyses urea + 2 H2O + H(+) = hydrogencarbonate + 2 NH4(+). The protein operates within nitrogen metabolism; urea degradation; CO(2) and NH(3) from urea (urease route): step 1/1. The sequence is that of Urease subunit gamma from Corynebacterium glutamicum (strain R).